We begin with the raw amino-acid sequence, 262 residues long: Cytochrome c oxidase subunit 2 (262 aa).

2 helical membrane passes run 31–51 (HIMFYLCLILGLVSYILYVII) and 72–92 (IIWTIFPAVILLLIAFPSFIL). Cu cation is bound by residues His175, Cys210, Glu212, Cys214, His218, and Met221. Position 212 (Glu212) interacts with Mg(2+).

It belongs to the cytochrome c oxidase subunit 2 family. As to quaternary structure, component of the cytochrome c oxidase (complex IV, CIV), a multisubunit enzyme composed of a catalytic core of 3 subunits and several supernumerary subunits. The complex exists as a monomer or a dimer and forms supercomplexes (SCs) in the inner mitochondrial membrane with ubiquinol-cytochrome c oxidoreductase (cytochrome b-c1 complex, complex III, CIII). Cu cation serves as cofactor.

The protein localises to the mitochondrion inner membrane. The enzyme catalyses 4 Fe(II)-[cytochrome c] + O2 + 8 H(+)(in) = 4 Fe(III)-[cytochrome c] + 2 H2O + 4 H(+)(out). Component of the cytochrome c oxidase, the last enzyme in the mitochondrial electron transport chain which drives oxidative phosphorylation. The respiratory chain contains 3 multisubunit complexes succinate dehydrogenase (complex II, CII), ubiquinol-cytochrome c oxidoreductase (cytochrome b-c1 complex, complex III, CIII) and cytochrome c oxidase (complex IV, CIV), that cooperate to transfer electrons derived from NADH and succinate to molecular oxygen, creating an electrochemical gradient over the inner membrane that drives transmembrane transport and the ATP synthase. Cytochrome c oxidase is the component of the respiratory chain that catalyzes the reduction of oxygen to water. Electrons originating from reduced cytochrome c in the intermembrane space (IMS) are transferred via the dinuclear copper A center (CU(A)) of subunit 2 and heme A of subunit 1 to the active site in subunit 1, a binuclear center (BNC) formed by heme A3 and copper B (CU(B)). The BNC reduces molecular oxygen to 2 water molecules using 4 electrons from cytochrome c in the IMS and 4 protons from the mitochondrial matrix. This is Cytochrome c oxidase subunit 2 (COX2) from Candida albicans (strain SC5314 / ATCC MYA-2876) (Yeast).